A 60-amino-acid polypeptide reads, in one-letter code: Potassium channel toxin Tst-beta-KTx (60 aa).

The BetaSPN-type CS-alpha/beta domain maps to 26 to 60 (QFGCPAYEGYCNDHCNDIERKDGECHGFKCKCAKD). 3 disulfide bridges follow: Cys29–Cys50, Cys36–Cys55, and Cys40–Cys57.

It belongs to the long chain scorpion toxin family. Class 1 subfamily. Expressed by the venom gland.

It is found in the secreted. In terms of biological role, inhibits voltage-gated potassium channels Kv1.1/KCNA1, Kv1.2/KCNA2, and Kv1.3/KCNA3. Functionally, does not induce hemolytic activity, lactate dehydrogenase (LDH) release from mast cells, mast cell degranulation, and antimicrobial effects. In vivo, injection into mice causes moderate edema formation, but induces very weak or no change in nociceptive sensibility. It also reduces mice locomotion, suggesting an increase in anxiety, but causes no alteration in rearing (standing on hind limbs). The chain is Potassium channel toxin Tst-beta-KTx from Tityus stigmurus (Brazilian scorpion).